The chain runs to 309 residues: HPr kinase/phosphorylase (309 aa).

Active-site residues include H138 and K159. Residue 153–160 (GQSGVGKS) participates in ATP binding. A Mg(2+)-binding site is contributed by S160. D177 acts as the Proton acceptor; for phosphorylation activity. Proton donor; for dephosphorylation activity in catalysis. The tract at residues 201 to 210 (LEIRGLGIIN) is important for the catalytic mechanism of both phosphorylation and dephosphorylation. E202 lines the Mg(2+) pocket. Residue R243 is part of the active site. Positions 264–269 (PVRPGR) are important for the catalytic mechanism of dephosphorylation.

It belongs to the HPrK/P family. Homohexamer. It depends on Mg(2+) as a cofactor.

It carries out the reaction [HPr protein]-L-serine + ATP = [HPr protein]-O-phospho-L-serine + ADP + H(+). The enzyme catalyses [HPr protein]-O-phospho-L-serine + phosphate + H(+) = [HPr protein]-L-serine + diphosphate. In terms of biological role, catalyzes the ATP- as well as the pyrophosphate-dependent phosphorylation of a specific serine residue in HPr, a phosphocarrier protein of the phosphoenolpyruvate-dependent sugar phosphotransferase system (PTS). HprK/P also catalyzes the pyrophosphate-producing, inorganic phosphate-dependent dephosphorylation (phosphorolysis) of seryl-phosphorylated HPr (P-Ser-HPr). The two antagonistic activities of HprK/P are regulated by several intracellular metabolites, which change their concentration in response to the absence or presence of rapidly metabolisable carbon sources (glucose, fructose, etc.) in the growth medium. Also phosphorylates/dephosphorylates the HPr-like catabolite repression protein crh on a specific serine residue. Therefore, by controlling the phosphorylation state of HPr and crh, HPrK/P is a sensor enzyme that plays a major role in the regulation of carbon metabolism and sugar transport: it mediates carbon catabolite repression (CCR), and regulates PTS-catalyzed carbohydrate uptake and inducer exclusion. The polypeptide is HPr kinase/phosphorylase (Bacillus cytotoxicus (strain DSM 22905 / CIP 110041 / 391-98 / NVH 391-98)).